We begin with the raw amino-acid sequence, 203 residues long: Outer-membrane lipoprotein carrier protein (203 aa).

A signal peptide spans 1 to 21 (MKKWLAISCLIAGVTSTAVYA).

It belongs to the LolA family. Monomer.

It localises to the periplasm. Functionally, participates in the translocation of lipoproteins from the inner membrane to the outer membrane. Only forms a complex with a lipoprotein if the residue after the N-terminal Cys is not an aspartate (The Asp acts as a targeting signal to indicate that the lipoprotein should stay in the inner membrane). This is Outer-membrane lipoprotein carrier protein from Pectobacterium atrosepticum (strain SCRI 1043 / ATCC BAA-672) (Erwinia carotovora subsp. atroseptica).